A 217-amino-acid polypeptide reads, in one-letter code: MAAQCVRLARRSLPALALSLRPSPRLLCTATKQKNSGQNLEEDMGQSEQKADPPATEKTLLEEKVKLEEQLKETVEKYKRALADTENLRQRSQKLVEEAKLYGIQAFCKDLLEVADVLEKATQCVPKEEIKDDNPHLKNLYEGLVMTEVQIQKVFTKHGLLKLNPVGAKFDPYEHEALFHTPVEGKEPGTVALVSKVGYKLHGRTLRPALVGVVKEA.

A mitochondrion-targeting transit peptide spans 1–27; sequence MAAQCVRLARRSLPALALSLRPSPRLL. Residues 29-56 form a disordered region; it reads TATKQKNSGQNLEEDMGQSEQKADPPAT. The segment covering 30-39 has biased composition (polar residues); it reads ATKQKNSGQN. At Lys94 the chain carries N6-acetyllysine; alternate. Residue Lys94 is modified to N6-succinyllysine; alternate. Lys100 carries the post-translational modification N6-acetyllysine. The residue at position 120 (Lys120) is an N6-succinyllysine. The residue at position 215 (Lys215) is an N6-acetyllysine; alternate. An N6-succinyllysine; alternate modification is found at Lys215.

This sequence belongs to the GrpE family. As to quaternary structure, probable component of the PAM complex at least composed of a mitochondrial HSP70 protein, GRPEL1 or GRPEL2, TIMM44, TIMM16/PAM16 and TIMM14/DNAJC19. Binds to HSP70, HSC70 and HSJ1B.

The protein localises to the mitochondrion matrix. In terms of biological role, essential component of the PAM complex, a complex required for the translocation of transit peptide-containing proteins from the inner membrane into the mitochondrial matrix in an ATP-dependent manner. Seems to control the nucleotide-dependent binding of mitochondrial HSP70 to substrate proteins. In Homo sapiens (Human), this protein is GrpE protein homolog 1, mitochondrial (GRPEL1).